The primary structure comprises 89 residues: Small ribosomal subunit protein uS17 (89 aa).

The protein belongs to the universal ribosomal protein uS17 family. As to quaternary structure, part of the 30S ribosomal subunit.

One of the primary rRNA binding proteins, it binds specifically to the 5'-end of 16S ribosomal RNA. This chain is Small ribosomal subunit protein uS17, found in Azoarcus sp. (strain BH72).